We begin with the raw amino-acid sequence, 108 residues long: UPF0060 membrane protein SAR2425 (108 aa).

4 helical membrane passes run 5-25 (IFIF…IWLW), 31-51 (SSLV…IATF), 60-80 (VYAA…MVVD), and 86-106 (KYDV…LLPS).

The protein belongs to the UPF0060 family.

The protein localises to the cell membrane. The protein is UPF0060 membrane protein SAR2425 of Staphylococcus aureus (strain MRSA252).